Reading from the N-terminus, the 101-residue chain is Small ribosomal subunit protein uS14 (101 aa).

It belongs to the universal ribosomal protein uS14 family. As to quaternary structure, part of the 30S ribosomal subunit. Contacts proteins S3 and S10.

Its function is as follows. Binds 16S rRNA, required for the assembly of 30S particles and may also be responsible for determining the conformation of the 16S rRNA at the A site. The protein is Small ribosomal subunit protein uS14 of Dinoroseobacter shibae (strain DSM 16493 / NCIMB 14021 / DFL 12).